The following is a 374-amino-acid chain: DNA integrity scanning protein DisA (374 aa).

The region spanning 20–158 is the DAC domain; that stretch reads EALMRASLSA…DGERRVLEES (139 aa). ATP-binding positions include Gly-87, Leu-105, and 118–122; that span reads TRHRT.

The protein belongs to the DisA family. As to quaternary structure, homooctamer. Requires Mg(2+) as cofactor.

The enzyme catalyses 2 ATP = 3',3'-c-di-AMP + 2 diphosphate. Its function is as follows. Participates in a DNA-damage check-point that is active prior to asymmetric division when DNA is damaged. DisA forms globular foci that rapidly scan along the chromosomes during sporulation, searching for lesions. When a lesion is present, DisA pauses at the lesion site. This triggers a cellular response that culminates in a temporary block in sporulation initiation. Also has diadenylate cyclase activity, catalyzing the condensation of 2 ATP molecules into cyclic di-AMP (c-di-AMP). c-di-AMP acts as a signaling molecule that couples DNA integrity with progression of sporulation. The rise in c-di-AMP level generated by DisA while scanning the chromosome, operates as a positive signal that advances sporulation; upon encountering a lesion, the DisA focus arrests at the damaged site and halts c-di-AMP synthesis. This is DNA integrity scanning protein DisA from Streptomyces griseus subsp. griseus (strain JCM 4626 / CBS 651.72 / NBRC 13350 / KCC S-0626 / ISP 5235).